The chain runs to 883 residues: Glutamate receptor 2 (883 aa).

Residues 1 to 21 (MQKIMHISVLLSPVLWGLIFG) form the signal peptide. The Extracellular portion of the chain corresponds to 22 to 543 (VSSNSIQIGG…GVFSFLDPLA (522 aa)). A disulfide bond links Cys-78 and Cys-330. Asn-256, Asn-370, Asn-406, and Asn-413 each carry an N-linked (GlcNAc...) asparagine glycan. Pro-499, Thr-501, and Arg-506 together coordinate L-glutamate. A helical transmembrane segment spans residues 544–564 (YEIWMCIVFAYIGVSVVLFLV). At 565–591 (SRFSPYEWHTEEFEDGRETQSSESTNE) the chain is on the cytoplasmic side. An intramembrane region (helical; Pore-forming) is located at residues 592–607 (FGIFNSLWFSLGAFMQ). An intramembrane segment occupies 608–610 (QGC). The S-palmitoyl cysteine moiety is linked to residue Cys-610. Over 611–616 (DISPRS) the chain is Cytoplasmic. The helical transmembrane segment at 617–637 (LSGRIVGGVWWFFTLIIISSY) threads the bilayer. Topologically, residues 638–812 (TANLAAFLTV…EKTSALSLSN (175 aa)) are extracellular. L-glutamate-binding residues include Ser-675 and Thr-676. Ser-683 carries the post-translational modification Phosphoserine; by PKC. Phosphoserine; by PKG is present on Ser-717. Position 726 (Glu-726) interacts with L-glutamate. Cys-739 and Cys-794 are disulfide-bonded. The helical transmembrane segment at 813–833 (VAGVFYILVGGLGLAMLVALI) threads the bilayer. The Cytoplasmic segment spans residues 834–883 (EFCYKSRAEAKRMKVAKNPQNINPSSSQNSQNFATYKEGYNVYGIESVKI). Cys-836 carries the S-palmitoyl cysteine lipid modification. Residues Ser-860 and Ser-863 each carry the phosphoserine modification. Residues 867–877 (ATYKEGYNVYG) form a required for interaction with IQSEC1 region. Tyr-876 is subject to Phosphotyrosine. At Ser-880 the chain carries Phosphoserine.

Belongs to the glutamate-gated ion channel (TC 1.A.10.1) family. GRIA2 subfamily. Homotetramer or heterotetramer of pore-forming glutamate receptor subunits. Tetramers may be formed by the dimerization of dimers. May interact with MPP4. Forms a ternary complex with GRIP1 and CSPG4. Interacts with ATAD1 in an ATP-dependent manner. ATAD1-catalyzed ATP hydrolysis disrupts binding to ATAD1 and to GRIP1 and leads to AMPAR complex disassembly. Interacts with GRIP2. Interacts with GRIP1. Interacts with NSF via its C-terminus. Interacts with CACNG2, PICK1 and GRIP2. Interacts with GRIA1 and SYNDIG1. Part of a complex containing GRIA2, NSF and NAPA and/or NAPB. Interacts with SNX27 (via PDZ domain); the interaction is required for recycling to the plasma membrane when endocytosed and prevent degradation in lysosomes. Interacts with LRFN1. Found in a complex with GRIA1, GRIA3, GRIA4, CNIH2, CNIH3, CACNG2, CACNG3, CACNG4, CACNG5, CACNG7 and CACNG8. Interacts with CACNG5. Interacts with OLFM2. Interacts with AP4B1, AP4E1 and AP4M1; probably indirect it mediates the somatodendritic localization of GRIA2 in neurons. Forms a complex with GRIP1, NSG1 and STX12; controls the intracellular fate of AMPAR and the endosomal sorting of the GRIA2 subunit toward recycling and membrane targeting. Interacts with IQSEC1; the interaction is required for ARF6 activation. Interacts (heterotetramer form) with CNIH2 and CNIH3; this interaction promotes expression at the plasma membrane and extensively modulates their gating properties by slowing deactivation and desensitization kinetics. In terms of processing, palmitoylated. Depalmitoylated upon L-glutamate stimulation. Cys-610 palmitoylation leads to Golgi retention and decreased cell surface expression. In contrast, Cys-836 palmitoylation does not affect cell surface expression but regulates stimulation-dependent endocytosis. Phosphorylation at Tyr-876 is required for interaction with IQSEC1 and ARF6 activation, which in turn triggers AMPAR internalization for persistent synaptic depression. Post-translationally, ubiquitinated by RNF167, leading to its degradation. In terms of processing, N-glycosylated. Detected in forebrain. Detected in dendrites of neuronal cells. Expressed in the pyramidal cell layers of CA1 and CA3 and in the granule cell layer of the dentate gyrus.

The protein localises to the cell membrane. It is found in the postsynaptic cell membrane. Its subcellular location is the postsynaptic density membrane. It carries out the reaction Ca(2+)(in) = Ca(2+)(out). The catalysed reaction is Na(+)(in) = Na(+)(out). Ionotropic glutamate receptor that functions as a ligand-gated cation channel, gated by L-glutamate and glutamatergic agonists such as alpha-amino-3-hydroxy-5-methyl-4-isoxazolepropionic acid (AMPA), quisqualic acid, and kainic acid. L-glutamate acts as an excitatory neurotransmitter at many synapses in the central nervous system and plays an important role in fast excitatory synaptic transmission. Binding of the excitatory neurotransmitter L-glutamate induces a conformation change, leading to the opening of the cation channel, and thereby converts the chemical signal to an electrical impulse upon entry of monovalent and divalent cations such as sodium and calcium. The receptor then desensitizes rapidly and enters in a transient inactive state, characterized by the presence of bound agonist. In the presence of CACNG4 or CACNG7 or CACNG8, shows resensitization which is characterized by a delayed accumulation of current flux upon continued application of L-glutamate. Through complex formation with NSG1, GRIP1 and STX12 controls the intracellular fate of AMPAR and the endosomal sorting of the GRIA2 subunit toward recycling and membrane targeting. This is Glutamate receptor 2 from Rattus norvegicus (Rat).